The sequence spans 290 residues: Eukaryotic translation initiation factor 3 subunit F-2 (290 aa).

Positions 12–150 constitute an MPN domain; the sequence is VRLQPLVLFQ…TRLYCAVTMG (139 aa).

It belongs to the eIF-3 subunit F family. Component of the eukaryotic translation initiation factor 3 (eIF-3) complex. The eIF-3 complex interacts with pix.

Its subcellular location is the cytoplasm. In terms of biological role, component of the eukaryotic translation initiation factor 3 (eIF-3) complex, which is involved in protein synthesis of a specialized repertoire of mRNAs and, together with other initiation factors, stimulates binding of mRNA and methionyl-tRNAi to the 40S ribosome. The eIF-3 complex specifically targets and initiates translation of a subset of mRNAs involved in cell proliferation. In Drosophila mojavensis (Fruit fly), this protein is Eukaryotic translation initiation factor 3 subunit F-2.